The primary structure comprises 196 residues: Hibernation-associated plasma protein HP-20 (196 aa).

A signal peptide spans 1–23 (MTDVWRLAIFVLMVNVLNDQVSC). The Collagen-like domain occupies 25 to 63 (GPPGPVGYPGVPGVPGPRGPPGQPGAAGRPGDPGPKGPS). Over residues 28–47 (GPVGYPGVPGVPGPRGPPGQ) the composition is skewed to pro residues. Positions 28–64 (GPVGYPGVPGVPGPRGPPGQPGAAGRPGDPGPKGPSV) are disordered. A C1q domain is found at 67–196 (PCRERSAFTV…IYFSGFLISS (130 aa)).

Plasma; synthesized in the liver.

The protein resides in the secreted. Its function is as follows. Plasma proteins HP-20, HP-25, HP-27 and HP-55 form a 140 kDa complex via disulfide bonds in the plasma and are hibernation specific. This is Hibernation-associated plasma protein HP-20 from Tamias sibiricus (Siberian chipmunk).